A 144-amino-acid polypeptide reads, in one-letter code: Large ribosomal subunit protein uL15 (144 aa).

Residues 20–49 (GRGIGSGLGKTGGRGHKGQKSRSGGFHKVG) are disordered. The span at 21 to 31 (RGIGSGLGKTG) shows a compositional bias: gly residues.

It belongs to the universal ribosomal protein uL15 family. Part of the 50S ribosomal subunit.

In terms of biological role, binds to the 23S rRNA. The sequence is that of Large ribosomal subunit protein uL15 from Neisseria meningitidis serogroup A / serotype 4A (strain DSM 15465 / Z2491).